The following is a 226-amino-acid chain: Urease accessory protein UreF (226 aa).

This sequence belongs to the UreF family. As to quaternary structure, ureD, UreF and UreG form a complex that acts as a GTP-hydrolysis-dependent molecular chaperone, activating the urease apoprotein by helping to assemble the nickel containing metallocenter of UreC. The UreE protein probably delivers the nickel.

It is found in the cytoplasm. In terms of biological role, required for maturation of urease via the functional incorporation of the urease nickel metallocenter. The polypeptide is Urease accessory protein UreF (Burkholderia multivorans (strain ATCC 17616 / 249)).